The following is a 274-amino-acid chain: Shikimate dehydrogenase (NADP(+)) (274 aa).

Shikimate is bound by residues 14–16 (SLS) and threonine 61. Residue lysine 65 is the Proton acceptor of the active site. Residues asparagine 85 and aspartate 106 each coordinate shikimate. NADP(+)-binding positions include 130 to 134 (GAGGA), 153 to 158 (NRTAER), and alanine 217. Tyrosine 219 provides a ligand contact to shikimate. Residue glycine 240 participates in NADP(+) binding.

The protein belongs to the shikimate dehydrogenase family. In terms of assembly, homodimer.

The enzyme catalyses shikimate + NADP(+) = 3-dehydroshikimate + NADPH + H(+). The protein operates within metabolic intermediate biosynthesis; chorismate biosynthesis; chorismate from D-erythrose 4-phosphate and phosphoenolpyruvate: step 4/7. Involved in the biosynthesis of the chorismate, which leads to the biosynthesis of aromatic amino acids. Catalyzes the reversible NADPH linked reduction of 3-dehydroshikimate (DHSA) to yield shikimate (SA). The sequence is that of Shikimate dehydrogenase (NADP(+)) from Halorubrum lacusprofundi (strain ATCC 49239 / DSM 5036 / JCM 8891 / ACAM 34).